We begin with the raw amino-acid sequence, 184 residues long: Ribosome-recycling factor (184 aa).

This sequence belongs to the RRF family.

The protein resides in the cytoplasm. In terms of biological role, responsible for the release of ribosomes from messenger RNA at the termination of protein biosynthesis. May increase the efficiency of translation by recycling ribosomes from one round of translation to another. The polypeptide is Ribosome-recycling factor (Mycoplasma pneumoniae (strain ATCC 29342 / M129 / Subtype 1) (Mycoplasmoides pneumoniae)).